We begin with the raw amino-acid sequence, 391 residues long: E3 ubiquitin-protein ligase RMND5A (391 aa).

Met-1 is subject to N-acetylmethionine. The region spanning 114–146 (SQRLLNEVMVEHFFRQGMLDVAEELCQESGLSV) is the LisH domain. The region spanning 153–210 (PFVELNRILEALKVRVLRPALEWAVSNREMLIAQNSSLEFKLHRLYFISLLMGGTTNQ) is the CTLH domain. An RING-Gid-type zinc finger spans residues 336-377 (CPILRQQTTDNNPPMKLVCGHIISRDALNKMFNGSKLKCPYC).

Identified in the CTLH complex that contains GID4, RANBP9 and/or RANBP10, MKLN1, MAEA, RMND5A (or alternatively its paralog RMND5B), GID8, ARMC8, WDR26 and YPEL5. Within this complex, MAEA, RMND5A (or alternatively its paralog RMND5B), GID8, WDR26, and RANBP9 and/or RANBP10 form the catalytic core, while GID4, MKLN1, ARMC8 and YPEL5 have ancillary roles.

The protein localises to the nucleus. It localises to the nucleoplasm. It is found in the cytoplasm. The enzyme catalyses S-ubiquitinyl-[E2 ubiquitin-conjugating enzyme]-L-cysteine + [acceptor protein]-L-lysine = [E2 ubiquitin-conjugating enzyme]-L-cysteine + N(6)-ubiquitinyl-[acceptor protein]-L-lysine.. In terms of biological role, core component of the CTLH E3 ubiquitin-protein ligase complex that selectively accepts ubiquitin from UBE2H and mediates ubiquitination and subsequent proteasomal degradation of the transcription factor HBP1. MAEA and RMND5A are both required for catalytic activity of the CTLH E3 ubiquitin-protein ligase complex. Catalytic activity of the complex is required for normal cell proliferation. The CTLH E3 ubiquitin-protein ligase complex is not required for the degradation of enzymes involved in gluconeogenesis, such as FBP1. This chain is E3 ubiquitin-protein ligase RMND5A (Rmnd5a), found in Mus musculus (Mouse).